Here is a 153-residue protein sequence, read N- to C-terminus: Flagellar assembly factor FliW (153 aa).

It belongs to the FliW family. In terms of assembly, interacts with translational regulator CsrA and flagellin(s).

The protein resides in the cytoplasm. In terms of biological role, acts as an anti-CsrA protein, binds CsrA and prevents it from repressing translation of its target genes, one of which is flagellin. Binds to flagellin and participates in the assembly of the flagellum. The sequence is that of Flagellar assembly factor FliW from Leptospira biflexa serovar Patoc (strain Patoc 1 / Ames).